We begin with the raw amino-acid sequence, 219 residues long: Protein DMP5 (219 aa).

A disordered region spans residues 1–24 (MSALRLRNANTPAPELDELSDQTP). 4 helical membrane passes run 51-71 (LSNL…PVFT), 82-102 (FLTA…SFTD), 142-162 (MRFV…AVAL), and 182-202 (VLDI…MVFP).

This sequence belongs to the plant DMP1 protein family.

Its subcellular location is the endoplasmic reticulum membrane. Involved in membrane remodeling. The sequence is that of Protein DMP5 from Arabidopsis thaliana (Mouse-ear cress).